Reading from the N-terminus, the 218-residue chain is Ribose-5-phosphate isomerase A (218 aa).

Residues threonine 28–threonine 31, aspartate 81–aspartate 84, and lysine 94–glycine 97 each bind substrate. The active-site Proton acceptor is the glutamate 103. Substrate is bound at residue lysine 121.

This sequence belongs to the ribose 5-phosphate isomerase family. As to quaternary structure, homodimer.

The catalysed reaction is aldehydo-D-ribose 5-phosphate = D-ribulose 5-phosphate. It participates in carbohydrate degradation; pentose phosphate pathway; D-ribose 5-phosphate from D-ribulose 5-phosphate (non-oxidative stage): step 1/1. Catalyzes the reversible conversion of ribose-5-phosphate to ribulose 5-phosphate. The protein is Ribose-5-phosphate isomerase A of Yersinia pseudotuberculosis serotype IB (strain PB1/+).